A 162-amino-acid polypeptide reads, in one-letter code: Large ribosomal subunit protein uL15 (162 aa).

Positions 1–18 are enriched in basic and acidic residues; that stretch reads MKLNEIRDNEGATKDRMR. The tract at residues 1–42 is disordered; that stretch reads MKLNEIRDNEGATKDRMRVGRGIGSGKGKTAGRGVKGQKART. The span at 21-35 shows a compositional bias: gly residues; that stretch reads RGIGSGKGKTAGRGV.

Belongs to the universal ribosomal protein uL15 family. Part of the 50S ribosomal subunit.

Its function is as follows. Binds to the 23S rRNA. This is Large ribosomal subunit protein uL15 from Methylobacterium sp. (strain 4-46).